The following is a 482-amino-acid chain: Aspartyl/glutamyl-tRNA(Asn/Gln) amidotransferase subunit B (482 aa).

Belongs to the GatB/GatE family. GatB subfamily. Heterotrimer of A, B and C subunits.

The enzyme catalyses L-glutamyl-tRNA(Gln) + L-glutamine + ATP + H2O = L-glutaminyl-tRNA(Gln) + L-glutamate + ADP + phosphate + H(+). It catalyses the reaction L-aspartyl-tRNA(Asn) + L-glutamine + ATP + H2O = L-asparaginyl-tRNA(Asn) + L-glutamate + ADP + phosphate + 2 H(+). In terms of biological role, allows the formation of correctly charged Asn-tRNA(Asn) or Gln-tRNA(Gln) through the transamidation of misacylated Asp-tRNA(Asn) or Glu-tRNA(Gln) in organisms which lack either or both of asparaginyl-tRNA or glutaminyl-tRNA synthetases. The reaction takes place in the presence of glutamine and ATP through an activated phospho-Asp-tRNA(Asn) or phospho-Glu-tRNA(Gln). The polypeptide is Aspartyl/glutamyl-tRNA(Asn/Gln) amidotransferase subunit B (Thermotoga petrophila (strain ATCC BAA-488 / DSM 13995 / JCM 10881 / RKU-1)).